The following is a 152-amino-acid chain: Protein-export protein SecB (152 aa).

Belongs to the SecB family. In terms of assembly, homotetramer, a dimer of dimers. One homotetramer interacts with 1 SecA dimer.

It is found in the cytoplasm. Its function is as follows. One of the proteins required for the normal export of preproteins out of the cell cytoplasm. It is a molecular chaperone that binds to a subset of precursor proteins, maintaining them in a translocation-competent state. It also specifically binds to its receptor SecA. The chain is Protein-export protein SecB from Verminephrobacter eiseniae (strain EF01-2).